A 513-amino-acid polypeptide reads, in one-letter code: ATP synthase subunit alpha (513 aa).

169-176 (GDRQCGKT) provides a ligand contact to ATP.

This sequence belongs to the ATPase alpha/beta chains family. As to quaternary structure, F-type ATPases have 2 components, CF(1) - the catalytic core - and CF(0) - the membrane proton channel. CF(1) has five subunits: alpha(3), beta(3), gamma(1), delta(1), epsilon(1). CF(0) has three main subunits: a(1), b(2) and c(9-12). The alpha and beta chains form an alternating ring which encloses part of the gamma chain. CF(1) is attached to CF(0) by a central stalk formed by the gamma and epsilon chains, while a peripheral stalk is formed by the delta and b chains.

It is found in the cell inner membrane. The catalysed reaction is ATP + H2O + 4 H(+)(in) = ADP + phosphate + 5 H(+)(out). Functionally, produces ATP from ADP in the presence of a proton gradient across the membrane. The alpha chain is a regulatory subunit. The polypeptide is ATP synthase subunit alpha (Burkholderia vietnamiensis (strain G4 / LMG 22486) (Burkholderia cepacia (strain R1808))).